A 288-amino-acid polypeptide reads, in one-letter code: Beta-lactamase PSE-4 (288 aa).

Positions 1 to 17 (MKFLLAFSLLIPSVVFA) are cleaved as a signal peptide. The Acyl-ester intermediate role is filled by serine 65. Cysteine 72 and cysteine 118 form a disulfide bridge. 229–231 (RSG) lines the substrate pocket.

This sequence belongs to the class-A beta-lactamase family.

It carries out the reaction a beta-lactam + H2O = a substituted beta-amino acid. Hydrolyzes both carbenicillin and oxacillin. In Pseudomonas aeruginosa, this protein is Beta-lactamase PSE-4 (pse4).